Here is a 472-residue protein sequence, read N- to C-terminus: Serine/threonine-protein kinase ULK3 (472 aa).

Residues 14 to 270 (FILTERLGSG…FQDFFAHPWV (257 aa)) enclose the Protein kinase domain. ATP is bound by residues 20–28 (LGSGTYATV) and Lys-44. The Proton acceptor role is filled by Asp-137. Residue Ser-176 is modified to Phosphoserine. The 69-residue stretch at 280-348 (SLGRATALVV…SRAEELKAIV (69 aa)) folds into the MIT 1 domain. 4 positions are modified to phosphoserine; by autocatalysis: Ser-300, Ser-350, Ser-384, and Ser-464. Positions 375-444 (RLLAALEVAS…ARAEYLKEQV (70 aa)) constitute an MIT 2 domain.

It belongs to the protein kinase superfamily. Ser/Thr protein kinase family. APG1/unc-51/ULK1 subfamily. As to quaternary structure, interacts (via protein kinase domain) with SUFU. Post-translationally, autophosphorylated. Autophosphorylation is blocked by interaction with SUFU. In terms of tissue distribution, widely expressed. Highest levels observed in fetal brain. In adult tissues, high levels in brain, liver and kidney, moderate levels in testis and adrenal gland and low levels in heart, lung, stomach, thymus, prostate and placenta. In the brain, highest expression in the hippocampus, high levels also detected in the cerebellum, olfactory bulb and optic nerve. In the central nervous system, lowest levels in the spinal cord.

It is found in the cytoplasm. The enzyme catalyses L-seryl-[protein] + ATP = O-phospho-L-seryl-[protein] + ADP + H(+). The catalysed reaction is L-threonyl-[protein] + ATP = O-phospho-L-threonyl-[protein] + ADP + H(+). Its function is as follows. Serine/threonine protein kinase that acts as a regulator of Sonic hedgehog (SHH) signaling and autophagy. Acts as a negative regulator of SHH signaling in the absence of SHH ligand: interacts with SUFU, thereby inactivating the protein kinase activity and preventing phosphorylation of GLI proteins (GLI1, GLI2 and/or GLI3). Positively regulates SHH signaling in the presence of SHH: dissociates from SUFU, autophosphorylates and mediates phosphorylation of GLI2, activating it and promoting its nuclear translocation. Phosphorylates in vitro GLI2, as well as GLI1 and GLI3, although less efficiently. Also acts as a regulator of autophagy: following cellular senescence, able to induce autophagy. The polypeptide is Serine/threonine-protein kinase ULK3 (ULK3) (Homo sapiens (Human)).